A 273-amino-acid polypeptide reads, in one-letter code: Proteasome subunit beta type-10 (273 aa).

Met1 is subject to N-acetylmethionine. Positions 1 to 39 (MQKTVLEPQRGFSFENCERNAALQRALPGLRVPHARKTG) are cleaved as a propeptide — removed in mature form. Residue Thr40 is the Nucleophile of the active site. Ser230 bears the Phosphoserine mark.

It belongs to the peptidase T1B family. In terms of assembly, the 26S proteasome consists of a 20S proteasome core and two 19S regulatory subunits. The 20S proteasome core is composed of 28 subunits that are arranged in four stacked rings, resulting in a barrel-shaped structure. The two end rings are each formed by seven alpha subunits, and the two central rings are each formed by seven beta subunits. The catalytic chamber with the active sites is on the inside of the barrel. Component of the immunoproteasome, where it displaces the equivalent housekeeping subunit PSMB7. Component of the spermatoproteasome, a form of the proteasome specifically found in testis. In terms of processing, autocleaved. The resulting N-terminal Thr residue of the mature subunit is responsible for the nucleophile proteolytic activity.

The protein resides in the cytoplasm. The protein localises to the nucleus. It carries out the reaction Cleavage of peptide bonds with very broad specificity.. The proteasome is a multicatalytic proteinase complex which is characterized by its ability to cleave peptides with Arg, Phe, Tyr, Leu, and Glu adjacent to the leaving group at neutral or slightly basic pH. The proteasome has an ATP-dependent proteolytic activity. This subunit is involved in antigen processing to generate class I binding peptides. In Bos taurus (Bovine), this protein is Proteasome subunit beta type-10 (PSMB10).